The following is a 115-amino-acid chain: Prefoldin subunit beta (115 aa).

The protein belongs to the prefoldin subunit beta family. Heterohexamer of two alpha and four beta subunits.

It is found in the cytoplasm. In terms of biological role, molecular chaperone capable of stabilizing a range of proteins. Seems to fulfill an ATP-independent, HSP70-like function in archaeal de novo protein folding. In Methanococcus aeolicus (strain ATCC BAA-1280 / DSM 17508 / OCM 812 / Nankai-3), this protein is Prefoldin subunit beta.